Consider the following 196-residue polypeptide: Chloroplastic ATP-dependent Clp protease proteolytic subunit 1 (196 aa).

Catalysis depends on S101, which acts as the Nucleophile. The active site involves H126.

The protein belongs to the peptidase S14 family. In terms of assembly, component of the chloroplastic Clp protease core complex which consist of at least 16 proteins: CLPP4 (3 copies), CLPP5 (3 copies), CLPR4 (2 copies), ClpP1 (1 copy), CLPP6 (1 copy), CLPR2 (1 copy), CLPT1 (1 copy), CLPT2 (1 copy) and 3 copies of CLPP3 and/or CLPR1 and/or CLPR3. The core complex is organized in two heptameric rings, one containing CLPP3,4,5,6 in a 1:2:3:1 ratio and the other CLPP1 and CLPR1,2,3,4 in a 3:1:1:1:1 ratio. In terms of tissue distribution, mostly expressed in leaves. Also detected in stems, and to a lower extent, in roots (at protein level).

It localises to the plastid. Its subcellular location is the chloroplast stroma. It carries out the reaction Hydrolysis of proteins to small peptides in the presence of ATP and magnesium. alpha-casein is the usual test substrate. In the absence of ATP, only oligopeptides shorter than five residues are hydrolyzed (such as succinyl-Leu-Tyr-|-NHMec, and Leu-Tyr-Leu-|-Tyr-Trp, in which cleavage of the -Tyr-|-Leu- and -Tyr-|-Trp bonds also occurs).. In terms of biological role, cleaves peptides in various proteins in a process that requires ATP hydrolysis. Has a chymotrypsin-like activity. Plays a major role in the degradation of misfolded proteins. This chain is Chloroplastic ATP-dependent Clp protease proteolytic subunit 1, found in Arabidopsis thaliana (Mouse-ear cress).